The following is a 393-amino-acid chain: Nucleosome assembly protein 1-like 1 (393 aa).

The segment covering 1-10 has biased composition (basic and acidic residues); it reads MANIDNKEQT. 2 disordered regions span residues 1 to 36 and 132 to 165; these read MANI…NSKA and ECEW…KEDP. Acidic residues-rich tracts occupy residues 11-30 and 132-144; these read ELDQ…EAGE and ECEW…EDIS. The NAP1L motif signature appears at 126-151; it reads YEPTEEECEWKVDEEEDISGDLKDKA. Residues 145 to 165 are compositionally biased toward basic and acidic residues; sequence GDLKDKAKLEEEKKDEEKEDP. Positions 274–280 match the Nuclear localization signal motif; sequence IKKKQKH. A compositionally biased stretch (acidic residues) spans 347–378; sequence AIEDDDDDYDEEGEEADDEEGEEEADEDNDPD. Residues 347–393 are disordered; it reads AIEDDDDDYDEEGEEADDEEGEEEADEDNDPDYEPKKDQNPAECKQQ. Positions 379 to 393 are enriched in basic and acidic residues; the sequence is YEPKKDQNPAECKQQ.

Belongs to the nucleosome assembly protein (NAP) family. Forms homomultimers. Interacts with histone B4. Interacts with the B-type cyclins ccnb1 and ccnb2. In terms of processing, phosphorylated by cyclin B-cdc2 kinase complexes.

It is found in the cytoplasm. Its subcellular location is the nucleus. Functionally, acts as a chaperone for the linker histone to facilitate deposition of histone B4 onto linker DNA. Required for both remodeling of sperm chromatin into nucleosomes, and linker histone binding to nucleosome core dimers. Plays a role in tissue-specific gene regulation. Required for primitive hemopoiesis, acting upstream of tal1/scl. In Xenopus tropicalis (Western clawed frog), this protein is Nucleosome assembly protein 1-like 1.